The chain runs to 382 residues: Mannitol-1-phosphate 5-dehydrogenase (382 aa).

Residue 3–14 (AVHFGAGNIGRG) participates in NAD(+) binding.

Belongs to the mannitol dehydrogenase family.

The enzyme catalyses D-mannitol 1-phosphate + NAD(+) = beta-D-fructose 6-phosphate + NADH + H(+). The chain is Mannitol-1-phosphate 5-dehydrogenase from Aliivibrio salmonicida (strain LFI1238) (Vibrio salmonicida (strain LFI1238)).